A 291-amino-acid chain; its full sequence is MSPVKVFGHPMLTNVARVLLFLEEVGAEYELVPVDFVAGEHKRPQHVQLNPFAKMPGFQDGESLHIKSRAIAKYILRKYGGTAGLDLLGENSGIEELAMVDVWTEVEAQQYYPAISPVVFECIIIPFIIPGGGAAPNQTVVDESLERLRGVLGIYEARLEKSRYLAGDSISFADLNHIPFTFYFMTTPYAKVFDEYPKVKAWWEMLMARPAVQRVCKHMPTEFKLRARTRCLCTPRGCVPCRAGDDPTQEKRPPSRGWVIICPSTSSIPFQFQQHEESACASARASPDSLL.

A GST N-terminal domain is found at 2–83 (SPVKVFGHPM…YILRKYGGTA (82 aa)). Residues 41–42 (HK), 54–55 (KM), and 67–68 (KS) contribute to the glutathione site. The region spanning 93 to 223 (GIEELAMVDV…RVCKHMPTEF (131 aa)) is the GST C-terminal domain.

The protein belongs to the GST superfamily. Phi family.

It catalyses the reaction RX + glutathione = an S-substituted glutathione + a halide anion + H(+). Its function is as follows. Conjugation of reduced glutathione to a wide number of exogenous and endogenous hydrophobic electrophiles. In Triticum aestivum (Wheat), this protein is Glutathione S-transferase 2 (GSTA2).